A 390-amino-acid polypeptide reads, in one-letter code: MNKTNPTIALVAGEVSGDILGAGLIRQLKAHYPNARFIGIAGPRMLAEGCETLVDMEELSVMGLAEILKHLPRLLKIRKNVIQTMLQEKPDVYIGIDAPDFNLDVELKLKANGIKTIHYVSPSVWAWRQNRIHKIAKATHQVLAFLPFEKAFYDKFNVPCRFIGHTMADAIPLKPNRAEACQTLQIDPAQRYLAILVGSRGSEVEFLAEPFLKTALLLKEQFPDLQFLVPLVNEKRRIQFETIKAKITPNLDLHLIDGNARQAMIAADATLLASGTAALEAMLCKSPMVVGYRMKPLTYFLAKRLVKTDYISLPNLLANEMLVPEMIQEECTPELLAEKLSVYLSDDESAVKNRHVLIQHFTDLHQKIQCNADKQAAQAVIDLLEGKENV.

It belongs to the LpxB family.

It catalyses the reaction a lipid X + a UDP-2-N,3-O-bis[(3R)-3-hydroxyacyl]-alpha-D-glucosamine = a lipid A disaccharide + UDP + H(+). It functions in the pathway bacterial outer membrane biogenesis; LPS lipid A biosynthesis. Functionally, condensation of UDP-2,3-diacylglucosamine and 2,3-diacylglucosamine-1-phosphate to form lipid A disaccharide, a precursor of lipid A, a phosphorylated glycolipid that anchors the lipopolysaccharide to the outer membrane of the cell. The sequence is that of Lipid-A-disaccharide synthase (lpxB) from Haemophilus influenzae (strain ATCC 51907 / DSM 11121 / KW20 / Rd).